Reading from the N-terminus, the 461-residue chain is Chromosomal replication initiator protein DnaA (461 aa).

The domain I, interacts with DnaA modulators stretch occupies residues 1 to 83 (MTASLWQQCL…LHFAVGRRPT (83 aa)). The domain II stretch occupies residues 83–124 (TAATVQMNTAAAPVADVRIGPAITVPSWTSKQDAMPEINHKS). Residues 125–341 (NINETYTFEN…GALNRVIANA (217 aa)) are domain III, AAA+ region. 4 residues coordinate ATP: Gly-169, Gly-171, Lys-172, and Thr-173. The interval 342–461 (RFTGKPINID…YSNLIRTLSS (120 aa)) is domain IV, binds dsDNA.

The protein belongs to the DnaA family. Oligomerizes as a right-handed, spiral filament on DNA at oriC.

Its subcellular location is the cytoplasm. Its function is as follows. Plays an essential role in the initiation and regulation of chromosomal replication. ATP-DnaA binds to the origin of replication (oriC) to initiate formation of the DNA replication initiation complex once per cell cycle. Binds the DnaA box (a 9 base pair repeat at the origin) and separates the double-stranded (ds)DNA. Forms a right-handed helical filament on oriC DNA; dsDNA binds to the exterior of the filament while single-stranded (ss)DNA is stabiized in the filament's interior. The ATP-DnaA-oriC complex binds and stabilizes one strand of the AT-rich DNA unwinding element (DUE), permitting loading of DNA polymerase. After initiation quickly degrades to an ADP-DnaA complex that is not apt for DNA replication. Binds acidic phospholipids. This Tolumonas auensis (strain DSM 9187 / NBRC 110442 / TA 4) protein is Chromosomal replication initiator protein DnaA.